Here is a 569-residue protein sequence, read N- to C-terminus: Carboxylesterase 3 (569 aa).

The first 24 residues, 1 to 24 (MRLHRLRARLNAVAFGLLLLLVHG), serve as a signal peptide directing secretion. An intrachain disulfide couples cysteine 95 to cysteine 122. N-linked (GlcNAc...) asparagine glycosylation is present at asparagine 103. Serine 227 serves as the catalytic Acyl-ester intermediate. Cysteine 279 and cysteine 290 form a disulfide bridge. Catalysis depends on charge relay system residues glutamate 345 and histidine 458. A Prevents secretion from ER motif is present at residues 566 to 569 (QEDL).

The protein belongs to the type-B carboxylesterase/lipase family. Post-translationally, N-glycosylated.

The protein resides in the endoplasmic reticulum lumen. It carries out the reaction a carboxylic ester + H2O = an alcohol + a carboxylate + H(+). Functionally, involved in the detoxification of xenobiotics and in the activation of ester and amide prodrugs. In Pongo abelii (Sumatran orangutan), this protein is Carboxylesterase 3 (CES3).